Consider the following 315-residue polypeptide: 4-diphosphocytidyl-2-C-methyl-D-erythritol kinase (315 aa).

Lys-8 is a catalytic residue. 93 to 103 (PVAAGLAGGSS) contacts ATP. Asp-135 is a catalytic residue.

This sequence belongs to the GHMP kinase family. IspE subfamily.

The catalysed reaction is 4-CDP-2-C-methyl-D-erythritol + ATP = 4-CDP-2-C-methyl-D-erythritol 2-phosphate + ADP + H(+). Its pathway is isoprenoid biosynthesis; isopentenyl diphosphate biosynthesis via DXP pathway; isopentenyl diphosphate from 1-deoxy-D-xylulose 5-phosphate: step 3/6. Functionally, catalyzes the phosphorylation of the position 2 hydroxy group of 4-diphosphocytidyl-2C-methyl-D-erythritol. The chain is 4-diphosphocytidyl-2-C-methyl-D-erythritol kinase from Heliobacterium modesticaldum (strain ATCC 51547 / Ice1).